The primary structure comprises 303 residues: Taste receptor type 2 member 13 (303 aa).

The Extracellular portion of the chain corresponds to 1 to 7 (MESALPS). Residues 8-28 (IFTLVIIAEFIIGNLSNGFIV) traverse the membrane as a helical segment. Residues 29-55 (LINCIDWVSKRELSSVDKLLIILAISR) lie on the Cytoplasmic side of the membrane. The chain crosses the membrane as a helical span at residues 56–76 (IGLIWEILVSWFLALHSLAIF). Over 77 to 85 (VSGTGLRIM) the chain is Extracellular. The helical transmembrane segment at 86–106 (IFSWIVSNHFNLWLATILSIF) threads the bilayer. Topologically, residues 107 to 128 (YLLKIASFSSPAFLYLKRRVNK) are cytoplasmic. A helical transmembrane segment spans residues 129–149 (VILMILLGTLVFLFLNLIQIN). At 150-184 (MLIKDWLDRYERNTTWNFSMSDFETFSVSVRFTMT) the chain is on the extracellular side. Residues Asn162 and Asn166 are each glycosylated (N-linked (GlcNAc...) asparagine). The helical transmembrane segment at 185-205 (MFSLTPFTVAFISFLLLVFSL) threads the bilayer. Residues 206 to 232 (QKHLQKMQLNYKGHRDPRTKVHTNALK) lie on the Cytoplasmic side of the membrane. Residues 233 to 253 (IVISFLLLYASFFLSILISWI) form a helical membrane-spanning segment. At 254–261 (SELYQNTV) the chain is on the extracellular side. The chain crosses the membrane as a helical span at residues 262–282 (IYMLCETIGAFYPSSHSFLLI). Residues 283 to 303 (LGNAKLRQAFLLVAAKVWAKR) are Cytoplasmic-facing.

Belongs to the G-protein coupled receptor T2R family.

It is found in the membrane. Receptor that may play a role in the perception of bitterness and is gustducin-linked. May play a role in sensing the chemical composition of the gastrointestinal content. The activity of this receptor may stimulate alpha gustducin, mediate PLC-beta-2 activation and lead to the gating of TRPM5. The polypeptide is Taste receptor type 2 member 13 (TAS2R13) (Pan troglodytes (Chimpanzee)).